Consider the following 378-residue polypeptide: Tyrosinase-like protein phomQ1' (378 aa).

Residues 42-62 (TIIVVSVITFAAIIGCWVFLS) form a helical membrane-spanning segment. Cu cation-binding residues include histidine 130 and histidine 139. Asparagine 209 carries an N-linked (GlcNAc...) asparagine glycan. Residues histidine 279 and histidine 305 each contribute to the Cu cation site.

The protein belongs to the tyrosinase family. Cu(2+) serves as cofactor.

The protein localises to the membrane. The protein operates within mycotoxin biosynthesis. Its function is as follows. Tyrosinase-like protein; part of the gene cluster that mediates the biosynthesis of the phomopsins, a group of hexapeptide mycotoxins which infects lupins and causes lupinosis disease in livestock. The pathway starts with the processing of the precursor phomA' by several endopeptidases including kexin proteases as well as the cluster-specific S41 family peptidase phomP1 and the oligopeptidase phomG' to produce 10 identical copies of the hexapeptide Tyr-Val-Ile-Pro-Ile-Asp. After being excised from the precursor peptide, the core peptides are cyclized and modified post-translationally by enzymes encoded within the gene cluster. The timing and order of proteolysis of the phomA' precursor and PTMs are still unknown. Two tyrosinase-like enzymes, phomQ1' and phomQ2, catalyze the chlorination and hydroxylation of Tyr, respectively. PhomYb, is proposed to be involved in the construction of the macrocyclic structure. The other 4 ustYa family proteins may be involved in PTMs that generate the unique structure of phomopsin A. PhomYa' is required for the hydroxylation of C-beta of Tyr. PhomYc', phomYd', and phomYe are responsible for the biosynthesis of 2,3-dehydroisoleucine (dIle), 2,3-dehydroaspartic acid (dAsp), and 3,4-dehydroproline (dPro), respectively. While dIle formation by phomYc' is indispensable for the installation of dAsp by phomYd', the order of the other PTMs have not been elucidated yet. Most of the biosynthetic enzymes likely have broad substrate specificity, and thus, there might be a metabolic grid from a precursor to phomopsin A. The enzyme(s) responsible for the biosynthesis of 3,4-dehydrovaline (dVal) have also not been identified yet. Finally, phomM' acts as an S-adenosylmethionine-dependent alpha-N-methyltransferase that catalyzes two successive N-methylation reactions, converting N-desmethyl-phomopsin A to phomopsin A and phomopsin A further to an N,N-dimethylated congener called phomopsin E. The chain is Tyrosinase-like protein phomQ1' from Diaporthe leptostromiformis (Lupinosis disease fungus).